A 527-amino-acid chain; its full sequence is MAKVNSGSSGCRAMVMAGQFWTKPFALSSQRSGPHRRSAAEVNRRMSSSRTAGHGSKTPLWSQQESYNHSSLGERSAWSNRTLIYRDVKAFLREIGGDPREARYWLTHFQRAGSTPAFAVLEVDPSVFDSHEMVQSLAFGLSFLQRMDMKLVVVMGLPAEITEDDHTRSATDSPLARTVMVKHCQALTEALQDNSANVMPFFSSEALLQLQDNPLDGSSSGPSVVVDSALLQWTLDCRVIPLVCPVGRDTTGRSSVLRSIQVTTAISQTLQPLKVIFLNSSGGIRNQNHKVLGLVSLPGDLPALSCAEWLNEVEQKRIGSIAELLNLLPVESSAVLTSANTLLTELFSHKGSGTLFKNGDPIRRYSSLEDIDVDRLLALINKSFEKNLREDYIASLEGRLHSVYLSEGYSAAAIITTEPVNSGTPYLDKFVVSSSKQGQGTGQILWECIRQDFSKLFWRSRTTNRINPWYFKHCDGSFVNGHWIVFWLGLSDIRESYELVEFAKSHPDSFCSLSTTETKPLQQHHGS.

The N-terminal 39 residues, 1 to 39 (MAKVNSGSSGCRAMVMAGQFWTKPFALSSQRSGPHRRSA), are a transit peptide targeting the mitochondrion. The tract at residues 28 to 65 (SSQRSGPHRRSAAEVNRRMSSSRTAGHGSKTPLWSQQE) is disordered. The segment at 40–83 (AEVNRRMSSSRTAGHGSKTPLWSQQESYNHSSLGERSAWSNRTL) is may stabilize the oligomeric structure. The tract at residues 40–361 (AEVNRRMSSS…SGTLFKNGDP (322 aa)) is amino-acid kinase domain (AAK). The N-acetyltransferase domain maps to 360-511 (DPIRRYSSLE…FAKSHPDSFC (152 aa)). Substrate-binding positions include Lys-386, Lys-429, and 459–464 (RSRTTN).

It belongs to the acetyltransferase family. In terms of assembly, homodimer. Homotetramer.

The protein localises to the mitochondrion matrix. It catalyses the reaction L-glutamate + acetyl-CoA = N-acetyl-L-glutamate + CoA + H(+). With respect to regulation, inhibited by L-arginine. Plays a role in the regulation of ureagenesis by producing the essential cofactor N-acetylglutamate (NAG), thus modulating carbamoylphosphate synthase I (cps1) activity. The polypeptide is N-acetylglutamate synthase, mitochondrial (Danio rerio (Zebrafish)).